The following is a 429-amino-acid chain: Kynureninase (429 aa).

Residues L109, T110, F137–D140, D222, H225, and Y247 contribute to the pyridoxal 5'-phosphate site. K248 carries the N6-(pyridoxal phosphate)lysine modification. Pyridoxal 5'-phosphate contacts are provided by W278 and N306.

This sequence belongs to the kynureninase family. As to quaternary structure, homodimer. Requires pyridoxal 5'-phosphate as cofactor.

It carries out the reaction L-kynurenine + H2O = anthranilate + L-alanine + H(+). It catalyses the reaction 3-hydroxy-L-kynurenine + H2O = 3-hydroxyanthranilate + L-alanine + H(+). Its pathway is amino-acid degradation; L-kynurenine degradation; L-alanine and anthranilate from L-kynurenine: step 1/1. It functions in the pathway cofactor biosynthesis; NAD(+) biosynthesis; quinolinate from L-kynurenine: step 2/3. Its function is as follows. Catalyzes the cleavage of L-kynurenine (L-Kyn) and L-3-hydroxykynurenine (L-3OHKyn) into anthranilic acid (AA) and 3-hydroxyanthranilic acid (3-OHAA), respectively. This is Kynureninase from Salinispora tropica (strain ATCC BAA-916 / DSM 44818 / JCM 13857 / NBRC 105044 / CNB-440).